Reading from the N-terminus, the 268-residue chain is Centromere protein Q (268 aa).

The tract at residues 1 to 31 is disordered; that stretch reads MSGKANASKKNFEQLKRNPKRKKDNEEVVLS. The residue at position 31 (S31) is a Phosphoserine. A coiled-coil region spans residues 170–203; that stretch reads ELMTGNIQSLKNKIQILASEVEEEEERVKQIHQI. S249 carries the post-translational modification Phosphoserine.

The protein belongs to the CENP-Q/OKP1 family. In terms of assembly, component of the CENPA-CAD complex, composed of CENPI, CENPK, CENPL, CENPO, CENPP, CENPQ, CENPR and CENPS. The CENPA-CAD complex interacts with the CENPA-NAC complex, at least composed of CENPA, CENPC, CENPH, CENPM, CENPN, CENPT and CENPU.

The protein localises to the nucleus. Its subcellular location is the chromosome. It is found in the centromere. Its function is as follows. Component of the CENPA-CAD (nucleosome distal) complex, a complex recruited to centromeres which is involved in assembly of kinetochore proteins, mitotic progression and chromosome segregation. May be involved in incorporation of newly synthesized CENPA into centromeres via its interaction with the CENPA-NAC complex. Plays an important role in chromosome congression and in the recruitment of CENP-O complex (which comprises CENPO, CENPP, CENPQ and CENPU), CENPE and PLK1 to the kinetochores. The protein is Centromere protein Q (CENPQ) of Macaca fascicularis (Crab-eating macaque).